The primary structure comprises 1116 residues: Cation channel sperm-associated auxiliary subunit beta (1116 aa).

Topologically, residues 1–1053 (MESPLIYVSV…QIYVDEAPLP (1053 aa)) are extracellular. Residues cysteine 35 and cysteine 60 are joined by a disulfide bond. 5 N-linked (GlcNAc...) asparagine glycosylation sites follow: asparagine 90, asparagine 100, asparagine 118, asparagine 226, and asparagine 321. Cysteines 189 and 302 form a disulfide. Cysteine 330 and cysteine 343 form a disulfide bridge. Residues asparagine 618 and asparagine 690 are each glycosylated (N-linked (GlcNAc...) asparagine). Disulfide bonds link cysteine 718/cysteine 816, cysteine 829/cysteine 1037, cysteine 911/cysteine 920, and cysteine 922/cysteine 937. Residues asparagine 913 and asparagine 921 are each glycosylated (N-linked (GlcNAc...) asparagine). N-linked (GlcNAc...) asparagine glycosylation is found at asparagine 1010 and asparagine 1015. Residues 1054-1076 (FPGHTLIAVATAVVLGGLIFIAF) form a helical membrane-spanning segment. Residues 1077-1116 (MFQLQGIHPWRTFQRWIRRNQEKFSSISLSELIHRSKSEE) are Cytoplasmic-facing.

As to quaternary structure, component of the CatSper complex or CatSpermasome composed of the core pore-forming members CATSPER1, CATSPER2, CATSPER3 and CATSPER4 as well as auxiliary members CATSPERB, CATSPERG, CATSPERD, CATSPERE, CATSPERZ, C2CD6/CATSPERT, TMEM249, TMEM262 and EFCAB9. HSPA1 may be an additional auxiliary complex member. The core complex members CATSPER1, CATSPER2, CATSPER3 and CATSPER4 form a heterotetrameric channel. The auxiliary CATSPERB, CATSPERG, CATSPERD and CATSPERE subunits form a pavilion-like structure over the pore which stabilizes the complex through interactions with CATSPER4, CATSPER3, CATSPER1 and CATSPER2 respectively. TMEM262/CATSPERH interacts with CATSPERB, further stabilizing the complex. C2CD6/CATSPERT interacts at least with CATSPERD and is required for targeting the CatSper complex in the flagellar membrane.

Its subcellular location is the cell projection. The protein resides in the cilium. It localises to the flagellum membrane. Its function is as follows. Auxiliary component of the CatSper complex, a complex involved in sperm cell hyperactivation. Sperm cell hyperactivation is needed for sperm motility which is essential late in the preparation of sperm for fertilization. The polypeptide is Cation channel sperm-associated auxiliary subunit beta (Homo sapiens (Human)).